Reading from the N-terminus, the 310-residue chain is Homoserine O-acetyltransferase (310 aa).

C142 (acyl-thioester intermediate) is an active-site residue. Substrate-binding residues include K163 and S192. The active-site Proton acceptor is H235. E237 is an active-site residue. R249 contacts substrate.

This sequence belongs to the MetA family.

The protein resides in the cytoplasm. The catalysed reaction is L-homoserine + acetyl-CoA = O-acetyl-L-homoserine + CoA. It functions in the pathway amino-acid biosynthesis; L-methionine biosynthesis via de novo pathway; O-acetyl-L-homoserine from L-homoserine: step 1/1. Its function is as follows. Transfers an acetyl group from acetyl-CoA to L-homoserine, forming acetyl-L-homoserine. The chain is Homoserine O-acetyltransferase from Parabacteroides distasonis (strain ATCC 8503 / DSM 20701 / CIP 104284 / JCM 5825 / NCTC 11152).